A 452-amino-acid chain; its full sequence is Probable phosphoglucosamine mutase (452 aa).

Residue S101 is the Phosphoserine intermediate of the active site. Residues S101, D242, D244, and D246 each coordinate Mg(2+). S101 carries the post-translational modification Phosphoserine.

The protein belongs to the phosphohexose mutase family. Mg(2+) is required as a cofactor. In terms of processing, activated by phosphorylation.

The catalysed reaction is alpha-D-glucosamine 1-phosphate = D-glucosamine 6-phosphate. Functionally, catalyzes the conversion of glucosamine-6-phosphate to glucosamine-1-phosphate. This chain is Probable phosphoglucosamine mutase, found in Methanosphaera stadtmanae (strain ATCC 43021 / DSM 3091 / JCM 11832 / MCB-3).